Consider the following 185-residue polypeptide: Protein FAM219A (185 aa).

Methionine 1 is modified (N-acetylmethionine). Residues 1-131 (MMEEIDRFQV…SRYSSSGYSS (131 aa)) are disordered. The residue at position 47 (serine 47) is a Phosphoserine. Residues 52 to 61 (KLEKQRELAR) are compositionally biased toward basic and acidic residues. A compositionally biased stretch (polar residues) spans 66–80 (KNGSMGSPVNQQPKK). A phosphoserine mark is found at serine 72 and serine 102. Threonine 113 is modified (phosphothreonine). 2 positions are modified to phosphoserine: serine 115 and serine 122. Low complexity predominate over residues 122–131 (SRYSSSGYSS).

The protein belongs to the FAM219 family.

The chain is Protein FAM219A (FAM219A) from Homo sapiens (Human).